Consider the following 183-residue polypeptide: Hypoxanthine/guanine phosphoribosyltransferase (183 aa).

This sequence belongs to the purine/pyrimidine phosphoribosyltransferase family. Archaeal HPRT subfamily. As to quaternary structure, homodimer.

The protein localises to the cytoplasm. It catalyses the reaction IMP + diphosphate = hypoxanthine + 5-phospho-alpha-D-ribose 1-diphosphate. The enzyme catalyses GMP + diphosphate = guanine + 5-phospho-alpha-D-ribose 1-diphosphate. Its pathway is purine metabolism; IMP biosynthesis via salvage pathway; IMP from hypoxanthine: step 1/1. Catalyzes a salvage reaction resulting in the formation of IMP that is energically less costly than de novo synthesis. The protein is Hypoxanthine/guanine phosphoribosyltransferase of Methanothermococcus okinawensis (strain DSM 14208 / JCM 11175 / IH1).